A 496-amino-acid chain; its full sequence is Acetyl-coenzyme A carboxylase carboxyl transferase subunit beta, chloroplastic (496 aa).

Residues 229-496 (LWVQCENCYG…FFPLNKNFIK (268 aa)) enclose the CoA carboxyltransferase N-terminal domain. Residues Cys-233, Cys-236, Cys-252, and Cys-255 each coordinate Zn(2+). Residues 233 to 255 (CENCYGLNYKKFFRLKLHICEQC) form a C4-type zinc finger.

The protein belongs to the AccD/PCCB family. As to quaternary structure, acetyl-CoA carboxylase is a heterohexamer composed of biotin carboxyl carrier protein, biotin carboxylase and 2 subunits each of ACCase subunit alpha and ACCase plastid-coded subunit beta (accD). Zn(2+) is required as a cofactor.

It localises to the plastid. The protein localises to the chloroplast stroma. The enzyme catalyses N(6)-carboxybiotinyl-L-lysyl-[protein] + acetyl-CoA = N(6)-biotinyl-L-lysyl-[protein] + malonyl-CoA. It functions in the pathway lipid metabolism; malonyl-CoA biosynthesis; malonyl-CoA from acetyl-CoA: step 1/1. Functionally, component of the acetyl coenzyme A carboxylase (ACC) complex. Biotin carboxylase (BC) catalyzes the carboxylation of biotin on its carrier protein (BCCP) and then the CO(2) group is transferred by the transcarboxylase to acetyl-CoA to form malonyl-CoA. The sequence is that of Acetyl-coenzyme A carboxylase carboxyl transferase subunit beta, chloroplastic from Ranunculus macranthus (Large buttercup).